Reading from the N-terminus, the 440-residue chain is Adenylyltransferase and sulfurtransferase UBA4 (440 aa).

Position 1 is an N-acetylmethionine (Met1). ATP-binding positions include Gly77, Asp98, 105 to 109, Lys122, and 166 to 167; these read SNLHR and DS. Residues Cys208 and Cys211 each coordinate Zn(2+). The Glycyl thioester intermediate; for adenylyltransferase activity role is filled by Cys225. Zn(2+) is bound by residues Cys286 and Cys289. A Phosphoserine modification is found at Ser326. Positions 339 to 438 constitute a Rhodanese domain; it reads FLAKHIFLDV…YIDDIDQTIP (100 aa). Cys397 functions as the Cysteine persulfide intermediate; for sulfurtransferase activity in the catalytic mechanism.

The protein in the N-terminal section; belongs to the HesA/MoeB/ThiF family. UBA4 subfamily. Requires Zn(2+) as cofactor.

It is found in the cytoplasm. The protein localises to the cytosol. It participates in tRNA modification; 5-methoxycarbonylmethyl-2-thiouridine-tRNA biosynthesis. In terms of biological role, plays a central role in 2-thiolation of mcm(5)S(2)U at tRNA wobble positions of cytosolic tRNA(Lys), tRNA(Glu) and tRNA(Gln). Acts by mediating the C-terminal thiocarboxylation of sulfur carrier URM1. Its N-terminus first activates URM1 as acyl-adenylate (-COAMP), then the persulfide sulfur on the catalytic cysteine is transferred to URM1 to form thiocarboxylation (-COSH) of its C-terminus. The reaction probably involves hydrogen sulfide that is generated from the persulfide intermediate and that acts as a nucleophile towards URM1. Subsequently, a transient disulfide bond is formed. Does not use thiosulfate as sulfur donor; NFS1 probably acting as a sulfur donor for thiocarboxylation reactions. Prior mcm(5) tRNA modification by the elongator complex is required for 2-thiolation. May also be involved in protein urmylation. The protein is Adenylyltransferase and sulfurtransferase UBA4 of Saccharomyces cerevisiae (strain RM11-1a) (Baker's yeast).